The sequence spans 85 residues: YcgL domain-containing protein PC1_1941 (85 aa).

One can recognise a YcgL domain in the interval 1–85 (MFCVIYRSAK…PVENLLNTPV (85 aa)).

The protein is YcgL domain-containing protein PC1_1941 of Pectobacterium carotovorum subsp. carotovorum (strain PC1).